Here is a 197-residue protein sequence, read N- to C-terminus: Imidazoleglycerol-phosphate dehydratase (197 aa).

Belongs to the imidazoleglycerol-phosphate dehydratase family.

The protein resides in the cytoplasm. It catalyses the reaction D-erythro-1-(imidazol-4-yl)glycerol 3-phosphate = 3-(imidazol-4-yl)-2-oxopropyl phosphate + H2O. The protein operates within amino-acid biosynthesis; L-histidine biosynthesis; L-histidine from 5-phospho-alpha-D-ribose 1-diphosphate: step 6/9. The polypeptide is Imidazoleglycerol-phosphate dehydratase (Thioalkalivibrio sulfidiphilus (strain HL-EbGR7)).